Here is a 465-residue protein sequence, read N- to C-terminus: Cysteine--tRNA ligase (465 aa).

Residue C30 participates in Zn(2+) binding. Residues 32–42 carry the 'HIGH' region motif; sequence ITVYDYCHVGH. Zn(2+)-binding residues include C214, H239, and E243. Positions 271-275 match the 'KMSKS' region motif; sequence KMSKS. An ATP-binding site is contributed by K274.

Belongs to the class-I aminoacyl-tRNA synthetase family. As to quaternary structure, monomer. The cofactor is Zn(2+).

It localises to the cytoplasm. It catalyses the reaction tRNA(Cys) + L-cysteine + ATP = L-cysteinyl-tRNA(Cys) + AMP + diphosphate. This chain is Cysteine--tRNA ligase, found in Burkholderia orbicola (strain MC0-3).